The following is a 525-amino-acid chain: DNA polymerase epsilon subunit 2 (525 aa).

Belongs to the DNA polymerase epsilon subunit B family. Component of the epsilon DNA polymerase complex consisting of four subunits: the catalytic subunit PolE1/DNApol-epsilon255 and the accessory subunits PolE2/DNApol-epsilon58, Chrac-14/DNApolE3 and PolE4.

Its subcellular location is the nucleus. In terms of biological role, accessory component of the DNA polymerase epsilon complex. Participates in DNA repair and in chromosomal DNA replication. Has a role in the entrance and progression through S phase. Has a role in endoreplication. Essential for viability and tissue development. The protein is DNA polymerase epsilon subunit 2 of Drosophila melanogaster (Fruit fly).